The sequence spans 189 residues: Testis-expressed protein 22 (189 aa).

Positions 1–120 (MDSRQQRPQR…TQSVPTPPLQ (120 aa)) are disordered. Positions 14 to 24 (QWQLAQEQRQQ) are enriched in low complexity. Residues 70–87 (IDERRRLALQRMQERTDT) are compositionally biased toward basic and acidic residues. Residues 103–114 (QQTETSPSTQSV) are compositionally biased toward low complexity.

As to expression, mainly expressed in spermatocytes and spermatids in testis.

It localises to the cytoplasm. The protein localises to the cytoplasmic vesicle. The protein resides in the secretory vesicle. It is found in the acrosome. The polypeptide is Testis-expressed protein 22 (Tex22) (Mus musculus (Mouse)).